The sequence spans 218 residues: N-(5'-phosphoribosyl)anthranilate isomerase (218 aa).

The protein belongs to the TrpF family.

It carries out the reaction N-(5-phospho-beta-D-ribosyl)anthranilate = 1-(2-carboxyphenylamino)-1-deoxy-D-ribulose 5-phosphate. It functions in the pathway amino-acid biosynthesis; L-tryptophan biosynthesis; L-tryptophan from chorismate: step 3/5. This Lachnoclostridium phytofermentans (strain ATCC 700394 / DSM 18823 / ISDg) (Clostridium phytofermentans) protein is N-(5'-phosphoribosyl)anthranilate isomerase.